A 240-amino-acid polypeptide reads, in one-letter code: 2,3,4,5-tetrahydropyridine-2,6-dicarboxylate N-acetyltransferase (240 aa).

Belongs to the transferase hexapeptide repeat family. DapH subfamily.

It carries out the reaction (S)-2,3,4,5-tetrahydrodipicolinate + acetyl-CoA + H2O = L-2-acetamido-6-oxoheptanedioate + CoA. The protein operates within amino-acid biosynthesis; L-lysine biosynthesis via DAP pathway; LL-2,6-diaminopimelate from (S)-tetrahydrodipicolinate (acetylase route): step 1/3. Functionally, catalyzes the transfer of an acetyl group from acetyl-CoA to tetrahydrodipicolinate. The polypeptide is 2,3,4,5-tetrahydropyridine-2,6-dicarboxylate N-acetyltransferase (Staphylococcus epidermidis (strain ATCC 12228 / FDA PCI 1200)).